The primary structure comprises 378 residues: Polygalacturonase (378 aa).

The signal sequence occupies residues 1–20 (MILTRSVVLGFLGSASLALA). Cysteine 39 and cysteine 57 are disulfide-bonded. 5 PbH1 repeats span residues 172 to 203 (SSGL…DIGD), 204 to 225 (SDSI…AINS), 226 to 246 (GTNI…SIGS), 255 to 276 (VETV…RVKA), and 284 to 306 (IKGV…TIRQ). The Proton donor role is filled by aspartate 218. The cysteines at positions 220 and 236 are disulfide-linked. The active site involves histidine 240. 2 disulfide bridges follow: cysteine 346-cysteine 352 and cysteine 370-cysteine 378.

Belongs to the glycosyl hydrolase 28 family.

It localises to the secreted. The enzyme catalyses (1,4-alpha-D-galacturonosyl)n+m + H2O = (1,4-alpha-D-galacturonosyl)n + (1,4-alpha-D-galacturonosyl)m.. This Penicillium expansum (Blue mold rot fungus) protein is Polygalacturonase (PEPG1).